Consider the following 643-residue polypeptide: Sodium-dependent nutrient amino acid transporter 1 (643 aa).

A disordered region spans residues Met1–Arg38. Residues Met1 to Asn40 are Cytoplasmic-facing. A compositionally biased stretch (low complexity) spans Pro8–Thr26. Residues Glu27–Ala36 are compositionally biased toward basic and acidic residues. 3 helical membrane passes run Trp41 to Val61, Gly74 to Leu94, and Ser111 to Ile131. Residues Asn185, Asn190, and Asn200 are each glycosylated (N-linked (GlcNAc...) asparagine). A run of 9 helical transmembrane segments spans residues Pro231 to Met251, Ala260 to Val280, Ala309 to Ser329, Ile343 to Leu363, Leu403 to Leu423, Val449 to Leu469, Thr476 to Leu496, Cys518 to Ile538, and Val554 to Tyr574.

It belongs to the sodium:neurotransmitter symporter (SNF) (TC 2.A.22) family.

The protein localises to the membrane. In terms of biological role, unusual broad substrate spectrum amino acid:sodium cotransporter that promotes absorption of the D isomers of essential amino acids. Neutral amino acids are the preferred substrates, especially methionine and phenylalanine. The chain is Sodium-dependent nutrient amino acid transporter 1 from Drosophila simulans (Fruit fly).